The following is a 197-amino-acid chain: V-type ATP synthase subunit E 2 (197 aa).

The protein belongs to the V-ATPase E subunit family.

In terms of biological role, produces ATP from ADP in the presence of a proton gradient across the membrane. In Clostridium tetani (strain Massachusetts / E88), this protein is V-type ATP synthase subunit E 2.